The chain runs to 376 residues: Glutamate 5-kinase (376 aa).

K23 serves as a coordination point for ATP. Residues S63, D150, and N162 each contribute to the substrate site. ATP-binding positions include 182-183 (SD) and 222-228 (TGGMASK). The PUA domain maps to 284–358 (GGALRIDAGA…GKQTAQLPEG (75 aa)).

This sequence belongs to the glutamate 5-kinase family.

It is found in the cytoplasm. It carries out the reaction L-glutamate + ATP = L-glutamyl 5-phosphate + ADP. It participates in amino-acid biosynthesis; L-proline biosynthesis; L-glutamate 5-semialdehyde from L-glutamate: step 1/2. Functionally, catalyzes the transfer of a phosphate group to glutamate to form L-glutamate 5-phosphate. This Corynebacterium diphtheriae (strain ATCC 700971 / NCTC 13129 / Biotype gravis) protein is Glutamate 5-kinase.